Reading from the N-terminus, the 379-residue chain is UDP-4-amino-4-deoxy-L-arabinose--oxoglutarate aminotransferase (379 aa).

Lysine 182 carries the N6-(pyridoxal phosphate)lysine modification.

Belongs to the DegT/DnrJ/EryC1 family. ArnB subfamily. As to quaternary structure, homodimer. Pyridoxal 5'-phosphate serves as cofactor.

It catalyses the reaction UDP-4-amino-4-deoxy-beta-L-arabinose + 2-oxoglutarate = UDP-beta-L-threo-pentopyranos-4-ulose + L-glutamate. The protein operates within nucleotide-sugar biosynthesis; UDP-4-deoxy-4-formamido-beta-L-arabinose biosynthesis; UDP-4-deoxy-4-formamido-beta-L-arabinose from UDP-alpha-D-glucuronate: step 2/3. It participates in bacterial outer membrane biogenesis; lipopolysaccharide biosynthesis. Its function is as follows. Catalyzes the conversion of UDP-4-keto-arabinose (UDP-Ara4O) to UDP-4-amino-4-deoxy-L-arabinose (UDP-L-Ara4N). The modified arabinose is attached to lipid A and is required for resistance to polymyxin and cationic antimicrobial peptides. In Salmonella heidelberg (strain SL476), this protein is UDP-4-amino-4-deoxy-L-arabinose--oxoglutarate aminotransferase.